A 403-amino-acid chain; its full sequence is Aspartic endopeptidase PEP1 (403 aa).

A signal peptide spans 1-20 (MVQISQIGAVLAVCSTLTVA). Positions 21 to 67 (APTKGKARFNVPQVAVPMKAVHHPAVAYARALHKFGMKVPKAVSDAA) are cleaved as a propeptide — activation peptide. Residues 82–400 (YVTQVTVGQG…DTEGPRIGFA (319 aa)) enclose the Peptidase A1 domain. Residue Asp98 is part of the active site. Asn159 and Asn270 each carry an N-linked (GlcNAc...) asparagine glycan. Asp293 is a catalytic residue. The cysteines at positions 329 and 361 are disulfide-linked.

The protein belongs to the peptidase A1 family.

It localises to the secreted. The enzyme catalyses Hydrolysis of proteins with broad specificity. Generally favors hydrophobic residues in P1 and P1', but also accepts Lys in P1, which leads to activation of trypsinogen. Does not clot milk.. In terms of biological role, secreted aspartic endopeptidase that allows assimilation of proteinaceous substrates. Can catalyze hydrolysis of the major structural proteins of basement membrane, elastin, collagen, and laminin. Thought to play a significant role in virulence. Functionally, can catalyze hydrolysis of the major structural proteins of basement membrane, elastin, collagen, and laminin. Thought to play a significant role in virulence. The sequence is that of Aspartic endopeptidase PEP1 (PEP1) from Trichophyton verrucosum (strain HKI 0517).